The sequence spans 901 residues: Core protein VP3 (901 aa).

It belongs to the orbivirus VP3 family.

It localises to the virion. Its function is as follows. The VP3 protein is one of the five proteins (with VP1, VP4, VP6 and VP7) which form the inner capsid of the virus. This is Core protein VP3 (Segment-3) from Bluetongue virus 1 (isolate South Africa) (BTV 1).